The sequence spans 394 residues: Mitogen-activated protein kinase 2 (394 aa).

Over residues 1 to 10 the composition is skewed to polar residues; that stretch reads MDGPAQQTDT. The interval 1–27 is disordered; it reads MDGPAQQTDTVMAEAAAAQQPAPPSQP. Residues 61-346 form the Protein kinase domain; the sequence is KPPIMPIGKG…VEDALAHPYL (286 aa). ATP-binding positions include 67–75 and Lys90; that span reads IGKGAYGIV. The Proton acceptor role is filled by Asp187. Phosphothreonine is present on Thr219. The short motif at 219–221 is the TXY element; the sequence is TEY. Tyr221 bears the Phosphotyrosine mark. A Phosphothreonine modification is found at Thr224.

The protein belongs to the protein kinase superfamily. CMGC Ser/Thr protein kinase family. MAP kinase subfamily. The cofactor is Mg(2+). Post-translationally, activated by cold, wounding and UV-C in a cultivar-dependent manner; phosphorylated at Tyr-221 in cv. Subicho but not in cv. Pungchon. As to expression, expressed constitutively in roots, stems, flowers and fruits of the hot pepper (cv. Subicho).

It carries out the reaction L-seryl-[protein] + ATP = O-phospho-L-seryl-[protein] + ADP + H(+). The catalysed reaction is L-threonyl-[protein] + ATP = O-phospho-L-threonyl-[protein] + ADP + H(+). Its activity is regulated as follows. Activated by threonine and tyrosine phosphorylation. Protein kinase involved in oxidative stress-mediated and innate immune MAP kinase signaling cascades. This Capsicum annuum (Capsicum pepper) protein is Mitogen-activated protein kinase 2.